A 172-amino-acid polypeptide reads, in one-letter code: uncharacterized protein (172 aa).

A HotDog ACOT-type domain is found at 10 to 122; the sequence is KESKVVKTSR…FLTFVALDSN (113 aa). Residues 148–172 form a disordered region; the sequence is RANERKNRKRHSQALANALGTDKPW.

Belongs to the acyl coenzyme A hydrolase family.

This is an uncharacterized protein from Bacillus subtilis (strain 168).